A 1077-amino-acid chain; its full sequence is Insulin receptor substrate 2-B (1077 aa).

The tract at residues M1–V66 is disordered. 2 consecutive short sequence motifs (YXXM motif) follow at residues Y33–M36 and Y147–M150. Residues D65–N170 enclose the PH domain. The IRS-type PTB domain occupies F195 to S299. 3 disordered regions span residues E342–R373, V428–Y464, and V476–T495. 2 stretches are compositionally biased toward polar residues: residues S350–G364 and V428–P444. Positions S445–G457 are enriched in low complexity. A compositionally biased stretch (polar residues) spans R477 to T495. The YXXM motif 3 motif lies at Y499 to M502. Residues K530–V544 show a composition bias toward polar residues. The disordered stretch occupies residues K530 to V571. 6 consecutive short sequence motifs (YXXM motif) follow at residues Y595 to M598, Y608 to M611, Y634 to M637, Y666 to M669, Y713 to M716, and Y891 to M894.

Post-translationally, phosphorylated by INSR.

Its function is as follows. Potentiates insulin signaling. This is Insulin receptor substrate 2-B (irs2-b) from Xenopus laevis (African clawed frog).